The primary structure comprises 206 residues: MKSARTSRAWIKAHINDNFVRKANHEGYRSRAAYKLQEIAERDALFSPGMTVVDLGASPGSWSQVALESVGPTGKVFALDMLDMQSLPGATFIQGDFRENGVLAALEKVLDGKRADLVISDMSPNLTGIRVSDQAHGMYLAELALMFCREHLNPGENFLVKVFQGSDFEAFRQLMQADFAKVVIRKPKASRDRSKELYLLGLEKII.

S-adenosyl-L-methionine contacts are provided by Gly60, Trp62, Asp80, Asp96, and Asp121. The Proton acceptor role is filled by Lys161.

The protein belongs to the class I-like SAM-binding methyltransferase superfamily. RNA methyltransferase RlmE family.

It localises to the cytoplasm. The enzyme catalyses uridine(2552) in 23S rRNA + S-adenosyl-L-methionine = 2'-O-methyluridine(2552) in 23S rRNA + S-adenosyl-L-homocysteine + H(+). Specifically methylates the uridine in position 2552 of 23S rRNA at the 2'-O position of the ribose in the fully assembled 50S ribosomal subunit. The polypeptide is Ribosomal RNA large subunit methyltransferase E (Nitrosomonas eutropha (strain DSM 101675 / C91 / Nm57)).